Here is a 420-residue protein sequence, read N- to C-terminus: Tyrosine--tRNA ligase 1 (420 aa).

Tyrosine 35 provides a ligand contact to L-tyrosine. The short motif at 40–49 (PTAGSLHIGH) is the 'HIGH' region element. 2 residues coordinate L-tyrosine: tyrosine 172 and glutamine 176. A 'KMSKS' region motif is present at residues 232–236 (KFGKT). Lysine 235 is a binding site for ATP. One can recognise an S4 RNA-binding domain in the interval 355 to 419 (INIAELLVKS…GKKQFRLIKL (65 aa)).

Belongs to the class-I aminoacyl-tRNA synthetase family. TyrS type 1 subfamily. As to quaternary structure, homodimer.

The protein localises to the cytoplasm. The catalysed reaction is tRNA(Tyr) + L-tyrosine + ATP = L-tyrosyl-tRNA(Tyr) + AMP + diphosphate + H(+). In terms of biological role, catalyzes the attachment of tyrosine to tRNA(Tyr) in a two-step reaction: tyrosine is first activated by ATP to form Tyr-AMP and then transferred to the acceptor end of tRNA(Tyr). This chain is Tyrosine--tRNA ligase 1, found in Pseudoalteromonas translucida (strain TAC 125).